The primary structure comprises 463 residues: 23S rRNA (uracil(1939)-C(5))-methyltransferase RlmD (463 aa).

The region spanning Lys6–Ala76 is the TRAM domain. Positions 90, 96, 99, and 178 each coordinate [4Fe-4S] cluster. S-adenosyl-L-methionine contacts are provided by Gln288, Phe317, Asn322, Glu341, Asp368, and Asp389. Cys415 serves as the catalytic Nucleophile.

It belongs to the class I-like SAM-binding methyltransferase superfamily. RNA M5U methyltransferase family. RlmD subfamily.

The catalysed reaction is uridine(1939) in 23S rRNA + S-adenosyl-L-methionine = 5-methyluridine(1939) in 23S rRNA + S-adenosyl-L-homocysteine + H(+). Its function is as follows. Catalyzes the formation of 5-methyl-uridine at position 1939 (m5U1939) in 23S rRNA. In Acinetobacter baumannii (strain SDF), this protein is 23S rRNA (uracil(1939)-C(5))-methyltransferase RlmD.